The primary structure comprises 345 residues: SLAM family member 5 (345 aa).

The N-terminal stretch at 1–21 (MAQHHLWILLLCLQTWPEAAG) is a signal peptide. The Extracellular portion of the chain corresponds to 22-225 (KDSEIFTVNG…AMGFRTHHTG (204 aa)). In terms of domain architecture, Ig-like V-type spans 26–129 (IFTVNGILGE…TTKRYNLQIY (104 aa)). The 73-residue stretch at 135-207 (PKITQSLMAS…PVSNNSDSIS (73 aa)) folds into the Ig-like C2-type domain. Asn-150 carries an N-linked (GlcNAc...) asparagine glycan. An intrachain disulfide couples Cys-155 to Cys-193. A helical transmembrane segment spans residues 226–246 (LLSVLAMFFLLVLILSSVFLF). Over 247–345 (RLFKRRQGRI…PGTSSYEIVI (99 aa)) the chain is Cytoplasmic. An ITSM 1 motif is present at residues 277–282 (TIYTYI). At Tyr-279 the chain carries Phosphotyrosine. A Phosphotyrosine; by LYN modification is found at Tyr-296. Positions 314–319 (TVYSEV) match the ITSM 2 motif. Residue Tyr-316 is modified to Phosphotyrosine. Residues 326–345 (GKASTQDSKPPGTSSYEIVI) form a disordered region. The span at 328–345 (ASTQDSKPPGTSSYEIVI) shows a compositional bias: polar residues. Residue Tyr-341 is modified to Phosphotyrosine; by FES.

In terms of assembly, homodimer; via its extracellular domain. Forms a head to tail dimer with a CD48 molecule from another cell. Interacts with SH2 domain-containing proteins SH2D1A/SAP and SH2D1B/EAT-2. Interacts with tyrosine-protein phosphatases PTPN6/SHP-1 and PTPN11//SHP-2 via its phosphorylated cytoplasmic domain, and this interaction is blocked by SH2D1A. Interacts (via phosphorylated ITSM 1 and 2) with INPP5D/SHIP1. Post-translationally, phosphorylated by tyrosine-protein kinase LCK on tyrosine residues following ligation induced by agonist monoclonal antibody. The association with SH2D1A is dependent of tyrosine phosphorylation of its cytoplasmic domain. Phosphorylated on Tyr-296 and Tyr-316 following platelet aggregation. Phosphorylated on tyrosine residues upon high affinity immunoglobulin epsilon receptor aggregation in mast cells. In terms of processing, N-glycosylated. Predominantly expressed in hematopoietic tissues, such as lymph node, spleen and peripheral leukocytes. Expressed in macrophages, B-cells, monocytes, platelets, thymocytes, T-cells and dendritic cells. Highly expressed in memory T-cells. Expressed in mast cells.

The protein resides in the cell membrane. Functionally, self-ligand receptor of the signaling lymphocytic activation molecule (SLAM) family. SLAM receptors triggered by homo- or heterotypic cell-cell interactions are modulating the activation and differentiation of a wide variety of immune cells and thus are involved in the regulation and interconnection of both innate and adaptive immune response. Activities are controlled by presence or absence of small cytoplasmic adapter proteins, SH2D1A/SAP and/or SH2D1B/EAT-2. Can mediate natural killer (NK) cell cytotoxicity dependent on SH2D1A and SH2D1B. Increases proliferative responses of activated T-cells and SH2D1A/SAP does not seem be required for this process. Homophilic interactions enhance interferon gamma/IFNG secretion in lymphocytes and induce platelet stimulation via a SH2D1A-dependent pathway. May serve as a marker for hematopoietic progenitor cells Required for a prolonged T-cell:B-cell contact, optimal T follicular helper function, and germinal center formation. In germinal centers involved in maintaining B-cell tolerance and in preventing autoimmunity. In mast cells negatively regulates high affinity immunoglobulin epsilon receptor signaling; independent of SH2D1A and SH2D1B but implicating FES and PTPN6/SHP-1. In macrophages enhances LPS-induced MAPK phosphorylation and NF-kappaB activation and modulates LPS-induced cytokine secretion; involving ITSM 2. Positively regulates macroautophagy in primary dendritic cells via stabilization of IRF8; inhibits TRIM21-mediated proteasomal degradation of IRF8. The polypeptide is SLAM family member 5 (CD84) (Homo sapiens (Human)).